We begin with the raw amino-acid sequence, 1069 residues long: Degenerin-like protein del-10 (1069 aa).

Over 1–95 (MVRMAERLAE…LNAASPVTRG (95 aa)) the chain is Cytoplasmic. Residues 96-116 (LWCMIIIAFVILVLVQCYSQI) traverse the membrane as a helical segment. At 117–830 (KLYISEPVAT…FWSLACDIGG (714 aa)) the chain is on the extracellular side. 7 N-linked (GlcNAc...) asparagine glycosylation sites follow: N216, N290, N374, N454, N539, N545, and N584. Residues 831-851 (ALGLFLGASLLTIIEIVYLCI) traverse the membrane as a helical segment. At 852–1069 (QYGLCGKRAR…EEDDDKHSYV (218 aa)) the chain is on the cytoplasmic side. Disordered regions lie at residues 898 to 948 (KKSQ…TLTP) and 960 to 1069 (RNSQ…HSYV). Residues 915–928 (GDKFRSRASSEESK) show a composition bias toward basic and acidic residues. Positions 938–948 (NDPSGNSTLTP) are enriched in polar residues. A compositionally biased stretch (basic and acidic residues) spans 967–978 (YHDDHHPEDHYY).

Belongs to the amiloride-sensitive sodium channel (TC 1.A.6) family.

It is found in the membrane. This Caenorhabditis elegans protein is Degenerin-like protein del-10.